The following is a 230-amino-acid chain: Octanoyltransferase (230 aa).

One can recognise a BPL/LPL catalytic domain in the interval 31 to 230 (PETPDELWIC…GDKLTRYLAP (200 aa)). Residues 70-77 (RGGQVTYH), 163-165 (ALG), and 176-178 (GVA) each bind substrate. Cys194 acts as the Acyl-thioester intermediate in catalysis.

It belongs to the LipB family.

Its subcellular location is the cytoplasm. It catalyses the reaction octanoyl-[ACP] + L-lysyl-[protein] = N(6)-octanoyl-L-lysyl-[protein] + holo-[ACP] + H(+). Its pathway is protein modification; protein lipoylation via endogenous pathway; protein N(6)-(lipoyl)lysine from octanoyl-[acyl-carrier-protein]: step 1/2. Functionally, catalyzes the transfer of endogenously produced octanoic acid from octanoyl-acyl-carrier-protein onto the lipoyl domains of lipoate-dependent enzymes. Lipoyl-ACP can also act as a substrate although octanoyl-ACP is likely to be the physiological substrate. The sequence is that of Octanoyltransferase from Albidiferax ferrireducens (strain ATCC BAA-621 / DSM 15236 / T118) (Rhodoferax ferrireducens).